A 119-amino-acid polypeptide reads, in one-letter code: Thioredoxin H4 (119 aa).

The Thioredoxin domain maps to 2–115; that stretch reads AAEEGQVIGC…LQAKIVKHTG (114 aa). Active-site nucleophile residues include Cys40 and Cys43. A disulfide bridge links Cys40 with Cys43.

This sequence belongs to the thioredoxin family. Plant H-type subfamily. As to quaternary structure, interacts with MDH1.

The protein localises to the cytoplasm. Functionally, thiol-disulfide oxidoreductase probably involved in the redox regulation of a number of cytosolic enzymes. Possesses insulin disulfide bonds reducing activity. The protein is Thioredoxin H4 (TRX4) of Arabidopsis thaliana (Mouse-ear cress).